Consider the following 622-residue polypeptide: DNA mismatch repair protein MutL (622 aa).

The protein belongs to the DNA mismatch repair MutL/HexB family.

Its function is as follows. This protein is involved in the repair of mismatches in DNA. It is required for dam-dependent methyl-directed DNA mismatch repair. May act as a 'molecular matchmaker', a protein that promotes the formation of a stable complex between two or more DNA-binding proteins in an ATP-dependent manner without itself being part of a final effector complex. This Phenylobacterium zucineum (strain HLK1) protein is DNA mismatch repair protein MutL.